Here is a 154-residue protein sequence, read N- to C-terminus: Large ribosomal subunit protein uL22c (154 aa).

Belongs to the universal ribosomal protein uL22 family. In terms of assembly, part of the 50S ribosomal subunit.

Its subcellular location is the plastid. It is found in the chloroplast. This protein binds specifically to 23S rRNA. Its function is as follows. The globular domain of the protein is located near the polypeptide exit tunnel on the outside of the subunit, while an extended beta-hairpin is found that lines the wall of the exit tunnel in the center of the 70S ribosome. The sequence is that of Large ribosomal subunit protein uL22c (rpl22) from Jasminum nudiflorum (Winter jasmine).